We begin with the raw amino-acid sequence, 475 residues long: Ribulose bisphosphate carboxylase large chain (475 aa).

A propeptide spanning residues 1 to 2 (MS) is cleaved from the precursor. At Pro-3 the chain carries N-acetylproline. Lys-14 carries the N6,N6,N6-trimethyllysine modification. Positions 123 and 173 each coordinate substrate. Lys-175 functions as the Proton acceptor in the catalytic mechanism. Lys-177 is a binding site for substrate. 3 residues coordinate Mg(2+): Lys-201, Asp-203, and Glu-204. Lys-201 carries the N6-carboxylysine modification. The Proton acceptor role is filled by His-294. Substrate contacts are provided by Arg-295, His-327, and Ser-379.

This sequence belongs to the RuBisCO large chain family. Type I subfamily. Heterohexadecamer of 8 large chains and 8 small chains; disulfide-linked. The disulfide link is formed within the large subunit homodimers. Mg(2+) is required as a cofactor. In terms of processing, the disulfide bond which can form in the large chain dimeric partners within the hexadecamer appears to be associated with oxidative stress and protein turnover.

The protein resides in the plastid. It is found in the chloroplast. It carries out the reaction 2 (2R)-3-phosphoglycerate + 2 H(+) = D-ribulose 1,5-bisphosphate + CO2 + H2O. It catalyses the reaction D-ribulose 1,5-bisphosphate + O2 = 2-phosphoglycolate + (2R)-3-phosphoglycerate + 2 H(+). In terms of biological role, ruBisCO catalyzes two reactions: the carboxylation of D-ribulose 1,5-bisphosphate, the primary event in carbon dioxide fixation, as well as the oxidative fragmentation of the pentose substrate in the photorespiration process. Both reactions occur simultaneously and in competition at the same active site. This chain is Ribulose bisphosphate carboxylase large chain (rbcL), found in Marchantia polymorpha (Common liverwort).